The sequence spans 428 residues: Trigger factor (428 aa).

Residues 163–248 (GDTAIIDFEG…INDVKVKELS (86 aa)) form the PPIase FKBP-type domain.

It belongs to the FKBP-type PPIase family. Tig subfamily.

It localises to the cytoplasm. It catalyses the reaction [protein]-peptidylproline (omega=180) = [protein]-peptidylproline (omega=0). In terms of biological role, involved in protein export. Acts as a chaperone by maintaining the newly synthesized protein in an open conformation. Functions as a peptidyl-prolyl cis-trans isomerase. The sequence is that of Trigger factor from Clostridioides difficile (strain 630) (Peptoclostridium difficile).